Reading from the N-terminus, the 829-residue chain is Cap-specific mRNA (nucleoside-2'-O-)-methyltransferase 1 (829 aa).

The tract at residues 1-68 (MKRAAQASDE…DSQNSQGSMA (68 aa)) is disordered. Positions 2–16 (KRAAQASDEPLKKRK) match the Bipartite nuclear localization signal motif. Low complexity predominate over residues 31–44 (QRTTSQDSSQSESL). Residues 55–68 (SRPSDSQNSQGSMA) show a composition bias toward polar residues. The region spanning 79-125 (YNNVSQKLMAKMGFREGEGLGKYGQGRKEIVEASTQRGRRGLGLMLK) is the G-patch domain. Substrate is bound by residues 195–199 (KTVFD) and R210. The 220-residue stretch at 223–442 (FFLNRAAMKM…ERYVVCKGLK (220 aa)) folds into the RrmJ-type SAM-dependent 2'-O-MTase domain. Residue N226 coordinates S-adenosyl-L-methionine. K231 is an active-site residue. S-adenosyl-L-methionine is bound by residues 269-275 (CAGPGGF) and 327-328 (DI). D356 is a catalytic residue. 366 to 368 (NLQ) serves as a coordination point for substrate. The active-site Proton acceptor is K396. N431 serves as a coordination point for substrate. Positions 745–779 (KTVNDPWTMAFSKSSKRKFFYNKQTKESTYDLPAT) constitute a WW domain.

The protein resides in the nucleus. It carries out the reaction a 5'-end (N(7)-methyl 5'-triphosphoguanosine)-ribonucleoside in mRNA + S-adenosyl-L-methionine = a 5'-end (N(7)-methyl 5'-triphosphoguanosine)-(2'-O-methyl-ribonucleoside) in mRNA + S-adenosyl-L-homocysteine + H(+). Functionally, S-adenosyl-L-methionine-dependent methyltransferase that mediates mRNA cap1 2'-O-ribose methylation to the 5'-cap structure of mRNAs. Methylates the ribose of the first nucleotide of a m(7)GpppG-capped mRNA and small nuclear RNA (snRNA) to produce m(7)GpppRm (cap1). Displays a preference for cap0 transcripts. Cap1 modification is linked to higher levels of translation. May be involved in the interferon response pathway. The protein is Cap-specific mRNA (nucleoside-2'-O-)-methyltransferase 1 (cmtr1) of Danio rerio (Zebrafish).